A 415-amino-acid polypeptide reads, in one-letter code: Acetylornithine aminotransferase (415 aa).

Pyridoxal 5'-phosphate-binding positions include 115 to 116 and F148; that span reads GA. Residue R151 coordinates N(2)-acetyl-L-ornithine. 239-242 contacts pyridoxal 5'-phosphate; it reads DEVQ. K268 is modified (N6-(pyridoxal phosphate)lysine). S295 serves as a coordination point for N(2)-acetyl-L-ornithine. Position 296 (T296) interacts with pyridoxal 5'-phosphate.

It belongs to the class-III pyridoxal-phosphate-dependent aminotransferase family. ArgD subfamily. As to quaternary structure, homodimer. Pyridoxal 5'-phosphate is required as a cofactor.

The protein resides in the cytoplasm. It catalyses the reaction N(2)-acetyl-L-ornithine + 2-oxoglutarate = N-acetyl-L-glutamate 5-semialdehyde + L-glutamate. It participates in amino-acid biosynthesis; L-arginine biosynthesis; N(2)-acetyl-L-ornithine from L-glutamate: step 4/4. This chain is Acetylornithine aminotransferase, found in Prochlorococcus marinus subsp. pastoris (strain CCMP1986 / NIES-2087 / MED4).